Here is a 465-residue protein sequence, read N- to C-terminus: Protein maelstrom (465 aa).

Positions 2–69 (APKKHSGFMM…ADRGKRERLN (68 aa)) form a DNA-binding region, HMG box. Residues 415 to 440 (MRKSSKHTGPSVSTQRERNAGAWNLP) form a disordered region.

Belongs to the maelstrom family.

It is found in the cytoplasm. It localises to the nucleus. Its function is as follows. Involved both in the piRNA and miRNA metabolic processes. As a component of the meiotic nuage, plays a central role during oogenesis by repressing transposable elements and preventing their mobilization, which is essential for the germline integrity. Repression of transposable elements is mediated via the piRNA metabolic process, which mediates the repression of transposable elements during meiosis by forming complexes composed of piRNAs and Piwi proteins and governs the repression of transposons. As a nuclear component, it is required for proper differentiation in the germline stem cell (GSC) lineage by repressing microRNA-7 (miR-7), thereby acting as an indirect regulator of bag-of-marbles (Bam). Acts by binding to the promoter of miR-7 gene and repressing its expression; miR-7 repression alleviates the Bam repression by miR-7, thereby allowing differentiation in the germline stem cell (GSC) lineage. This is Protein maelstrom (mael) from Drosophila yakuba (Fruit fly).